The chain runs to 1161 residues: Hamartin (1161 aa).

Lys-30 participates in a covalent cross-link: Glycyl lysine isopeptide (Lys-Gly) (interchain with G-Cter in ubiquitin). Disordered stretches follow at residues 296-336 and 353-591; these read PYVD…PSTR and CGMT…QRGV. Residues 303–336 show a composition bias toward low complexity; it reads SYGGSTSTPSSSSRLMLFSPPGQLPQSLSSPSTR. The segment covering 393–402 has biased composition (pro residues); the sequence is TSPPPAPPCP. Positions 403-784 are mediates interaction with WDR45B; that stretch reads QDDCVHGSAA…QIRQLQHDRE (382 aa). The segment covering 471-484 has biased composition (basic and acidic residues); the sequence is EKDKEEAAISKELS. Residues Ser-484, Ser-502, Ser-508, Ser-518, Ser-592, and Ser-595 each carry the phosphoserine modification. Residues 509–529 are compositionally biased toward polar residues; sequence LSGSQRKTHSAASGTQGSSVN. 3 coiled-coil regions span residues 721–849, 879–917, and 967–991; these read IRAA…NRQL, TAYR…AKKD, and EKDG…ERLD. Disordered stretches follow at residues 1003-1077 and 1092-1161; these read GHNE…SLPS and NKSE…PEHS. Residues 1004–1017 are compositionally biased toward basic and acidic residues; sequence HNEEASGHNGETRT. Positions 1026–1043 are enriched in low complexity; the sequence is SCGGRVTGGSSSSSSELS. Residues 1064 to 1077 show a composition bias toward polar residues; that stretch reads PSSSIPTTVGSLPS. Ser-1094 bears the Phosphoserine mark. A compositionally biased stretch (low complexity) spans 1103 to 1113; the sequence is VTMSSSSLSET. 2 stretches are compositionally biased toward basic and acidic residues: residues 1114-1124 and 1152-1161; these read LKTELGKDSGT and DYNETHPEHS.

In terms of assembly, component of the TSC-TBC complex (also named Rhebulator complex), composed of 2 molecules of TSC1, 2 molecules of TSC2 and 1 molecule of TBC1D7. Probably forms a complex composed of chaperones HSP90 and HSP70, co-chaperones STIP1/HOP, CDC37, PPP5C, PTGES3/p23, TSC1 and client protein TSC2. Forms a complex composed of chaperones HSP90 and HSP70, co-chaperones CDC37, PPP5C, TSC1 and client protein TSC2, CDK4, AKT, RAF1 and NR3C1; this complex does not contain co-chaperones STIP1/HOP and PTGES3/p23. Forms a complex containing HSP90AA1, TSC1 and TSC2; TSC1 is required to recruit TCS2 to the complex. Interacts (via C-terminus) with the closed form of HSP90AA1 (via the middle domain and TPR repeat-binding motif). Interacts with DOCK7. Interacts with FBXW5. Interacts with WDR45B. Interacts with RPAP3 and URI1. Post-translationally, phosphorylation at Ser-502 does not affect interaction with TSC2. In terms of processing, 'Lys-63'-linked ubiquitinated at Lys-30 by PELI1; the ubiquitination promotes TSC1/TSC2 complex stability.

It is found in the lysosome membrane. The protein resides in the cytoplasm. It localises to the cytosol. In terms of biological role, non-catalytic component of the TSC-TBC complex, a multiprotein complex that acts as a negative regulator of the canonical mTORC1 complex, an evolutionarily conserved central nutrient sensor that stimulates anabolic reactions and macromolecule biosynthesis to promote cellular biomass generation and growth. The TSC-TBC complex acts as a GTPase-activating protein (GAP) for the small GTPase RHEB, a direct activator of the protein kinase activity of mTORC1. In absence of nutrients, the TSC-TBC complex inhibits mTORC1, thereby preventing phosphorylation of ribosomal protein S6 kinase (RPS6KB1 and RPS6KB2) and EIF4EBP1 (4E-BP1) by the mTORC1 signaling. The TSC-TBC complex is inactivated in response to nutrients, relieving inhibition of mTORC1. Within the TSC-TBC complex, TSC1 stabilizes TSC2 and prevents TSC2 self-aggregation. Involved in microtubule-mediated protein transport via its ability to regulate mTORC1 signaling. Also acts as a co-chaperone for HSP90AA1 facilitating HSP90AA1 chaperoning of protein clients such as kinases, TSC2 and glucocorticoid receptor NR3C1. Increases ATP binding to HSP90AA1 and inhibits HSP90AA1 ATPase activity. Competes with the activating co-chaperone AHSA1 for binding to HSP90AA1, thereby providing a reciprocal regulatory mechanism for chaperoning of client proteins. Recruits TSC2 to HSP90AA1 and stabilizes TSC2 by preventing the interaction between TSC2 and ubiquitin ligase HERC1. The polypeptide is Hamartin (Mus musculus (Mouse)).